The primary structure comprises 362 residues: Heat-inducible transcription repressor HrcA (362 aa).

Belongs to the HrcA family.

Its function is as follows. Negative regulator of class I heat shock genes (grpE-dnaK-dnaJ and groELS operons). Prevents heat-shock induction of these operons. The sequence is that of Heat-inducible transcription repressor HrcA from Nitrobacter hamburgensis (strain DSM 10229 / NCIMB 13809 / X14).